Consider the following 706-residue polypeptide: Dual specificity calcium/calmodulin-dependent 3',5'-cyclic nucleotide phosphodiesterase 1C (706 aa).

Position 1 is an N-acetylmethionine (methionine 1). Residues 123-146 (EKPRFKSIVHAVQAGIFVERMYRR) are calmodulin-binding. The 378-residue stretch at 151-528 (VGLSYPPAVI…ERWRAKVPKE (378 aa)) folds into the PDEase domain. The Proton donor role is filled by histidine 228. Zn(2+) contacts are provided by histidine 232, histidine 268, aspartate 269, and aspartate 376. Mg(2+) is bound at residue aspartate 269. 2 disordered regions span residues 453–497 (LIDE…INNS) and 524–655 (KVPK…IKPP). 2 stretches are compositionally biased toward polar residues: residues 456-476 (ESSQ…INSS) and 483-497 (VKSS…INNS). Basic and acidic residues-rich tracts occupy residues 524–554 (KVPK…EAKS), 580–597 (RKGD…KAGE), and 603–630 (DLKD…DGTK). Positions 638-647 (APSTSSTSRI) are enriched in polar residues.

This sequence belongs to the cyclic nucleotide phosphodiesterase family. PDE1 subfamily. Homodimer. Zn(2+) serves as cofactor. Requires Mg(2+) as cofactor. In terms of tissue distribution, highly expressed in testis and at moderate levels in heart. Expressed at a moderate level in brain, the cerebellum, testis, heart and olfactory epithelium. As to expression, highly expressed in olfactory epithelium and at very low levels, if any, in other tissues. In the cochlea, expressed in the inner and outer hair cells (at protein level). In the brain, highly expressed in the neurons of the granule layer of the cerebellum, some Purkinje cells, the central amygdaloid nucleus, and the interpolar spinal trigem nucleus and, at moderate levels, in the glomerular and external plexiform layer of the olfactory bulb as well as in parts of the caudate-putamen and olfactory tubercle.

The protein resides in the lysosome. It carries out the reaction a nucleoside 3',5'-cyclic phosphate + H2O = a nucleoside 5'-phosphate + H(+). The catalysed reaction is 3',5'-cyclic GMP + H2O = GMP + H(+). It catalyses the reaction 3',5'-cyclic AMP + H2O = AMP + H(+). Its activity is regulated as follows. Type I PDE are activated by the binding of calmodulin in the presence of Ca(2+). Different splice variants may have different sensitivities to Ca(2+). Exhibits a higher sensitivity to Ca(2+) stimulation than isoforms 1 and 2. In terms of biological role, calmodulin-dependent cyclic nucleotide phosphodiesterase with a dual specificity for cAMP and cGMP, which are key regulators of many important physiological processes. Exhibits high affinity for both cAMP and cGMP. Modulates the amplitude and duration of the cAMP signal in sensory cilia in response to odorant stimulation, hence contributing to the generation of action potentials. Regulates smooth muscle cell proliferation. Regulates the stability of growth factor receptors, including PDGFRB. The polypeptide is Dual specificity calcium/calmodulin-dependent 3',5'-cyclic nucleotide phosphodiesterase 1C (Mus musculus (Mouse)).